A 315-amino-acid chain; its full sequence is Probable cell division protein WhiA (315 aa).

A DNA-binding region (H-T-H motif) is located at residues 280–313; it reads SLRELGKMLNPPVGKSGVNHRLRRIEKIADELKQ.

This sequence belongs to the WhiA family.

In terms of biological role, involved in cell division and chromosome segregation. This is Probable cell division protein WhiA from Clostridium botulinum (strain ATCC 19397 / Type A).